Reading from the N-terminus, the 579-residue chain is SHC-transforming protein 1 (579 aa).

N-acetylmethionine is present on methionine 1. Residues 1 to 137 (MDLLPPKPKY…QLGGEEWTRH (137 aa)) form a disordered region. The segment covering 16 to 44 (ESLSSLEEGASGSTPPEELPSPSASSLGP) has biased composition (low complexity). Phosphoserine occurs at positions 36 and 139. Lysine 154 is modified (N6-acetyllysine). Residues 156-339 (MGPGVSYLVR…AGFDGSAWDE (184 aa)) enclose the PID domain. Positions 337–357 (WDEEEEEPPDHQYYNDFPGKE) are disordered. Residues 340 to 483 (EEEEPPDHQY…SMAEQLQGEP (144 aa)) form a CH1 region. Phosphotyrosine occurs at positions 349, 350, and 423. Residues 432–451 (ARQAGGGAGPPNPSLNGSAP) are disordered. Serine 449 is modified (phosphoserine). Positions 484 to 575 (WFHGKLSRRE…GSELCLQQPV (92 aa)) constitute an SH2 domain.

As to quaternary structure, interacts with CPNE3; this interaction may mediate the binding of CPNE3 with ERBB2. Interacts with the NPXY motif of tyrosine-phosphorylated IGF1R and INSR in vitro via the PID domain. Once activated, binds to GRB2. Interacts with tyrosine-phosphorylated DDR2 and CD3T. Interacts with the N-terminal region of APS. Interacts with GRB7 and KIT. Interacts with PTK2/FAK1. Interacts with phosphorylated LRP1 and IRS4. Interacts with FLT4 (tyrosine-phosphorylated). Interacts with PDGFRB (tyrosine-phosphorylated). Interacts with ERBB4. Interacts with TEK/TIE2 (tyrosine-phosphorylated). Interacts with ALK, GAB2, TRIM31, INPP5D/SHIP1 and INPPL1/SHIP2. Interacts with PTPN6/SHP (tyrosine phosphorylated). Identified in a complex containing FGFR4, NCAM1, CDH2, PLCG1, FRS2, SRC, SHC1, GAP43 and CTTN. Interacts with EPHB1 and GRB2; activates the MAPK/ERK cascade to regulate cell migration. Interacts with the Trk receptors NTRK1, NTRK2 and NTRK3; in a phosphotyrosine-dependent manner. Interacts with CEACAM1; this interaction is CEACAM1-phosphorylation-dependent and mediates interaction with EGFR or INSR resulting in decrease coupling of SHC1 to the MAPK3/ERK1-MAPK1/ERK2 pathway. Interacts (via PID domain) with PEAK1 (when phosphorylated at 'Tyr-1177'). Found in a complex with PPP1CA, PPP1CC, SHC1 and PEAK1. Phosphorylated in response to FLT4 signaling. Tyrosine phosphorylated by ligand-activated PDGFRB. May be tyrosine phosphorylated by activated PTK2/FAK1. Tyrosine phosphorylated by TEK/TIE2. Tyrosine phosphorylated by activated PTK2B/PYK2. Dephosphorylation by PTPN2 may regulate interaction with GRB2. Phosphorylated by activated epidermal growth factor receptor. Phosphorylated in response to KIT signaling. Isoform p47Shc and isoform p52Shc are phosphorylated on tyrosine residues of the Pro-rich domain. Isoform p66Shc is phosphorylated on Ser-36 by PRKCB upon treatment with insulin, hydrogen peroxide or irradiation with ultraviolet light. FLT3 signaling promotes tyrosine phosphorylation of isoform p47Shc and isoform p52Shc. Also tyrosine phosphorylated by ligand-activated ALK. Widely expressed. Expressed in neural stem cells but absent in mature neurons.

It localises to the cytoplasm. It is found in the cell junction. The protein localises to the focal adhesion. Its subcellular location is the mitochondrion matrix. The protein resides in the mitochondrion. Signaling adapter that couples activated growth factor receptors to signaling pathways. Participates in signaling downstream of the angiopoietin receptor TEK/TIE2, and plays a role in the regulation of endothelial cell migration and sprouting angiogenesis. Participates in a signaling cascade initiated by activated KIT and KITLG/SCF. Isoform p47Shc and isoform p52Shc, once phosphorylated, couple activated receptor kinases to Ras via the recruitment of the GRB2/SOS complex and are implicated in the cytoplasmic propagation of mitogenic signals. Isoform p47Shc and isoform p52 may thus function as initiators of the Ras signaling cascade in various non-neuronal systems. Isoform p66Shc does not mediate Ras activation, but is involved in signal transduction pathways that regulate the cellular response to oxidative stress and life span. Isoform p66Shc acts as a downstream target of the tumor suppressor p53 and is indispensable for the ability of stress-activated p53 to induce elevation of intracellular oxidants, cytochrome c release and apoptosis. The expression of isoform p66Shc has been correlated with life span. In Mus musculus (Mouse), this protein is SHC-transforming protein 1 (Shc1).